Consider the following 313-residue polypeptide: MEIIFYHPFFDAAQWIQGMQQRLPNINIRQWKRGDNKHADYAMVWAPPYEMLANRSGLKGIFILGAGVEAILKQEQQKPGMLPAGVPLMRLEDAGMGLQMQEYAVAMVLHYLRRMDEYKLQQGQRRWKQLEPYDRKDFVVGVLGAGVLGRRVAQTLVEWGFIVRCWSRTPKQINNVVSFHGEDQLGDFLSGSKVLINLLPDTPKTRGILNLSLFSQLKPKSYLINIARGAHLVEHDLLVAIDKGYIVGASLDVFVEEPLPEMHPFWTHPRITVTPHVAAITIPDIAMDTISENIRRIEKGELSTGVVDIKLGY.

Arg228 is a catalytic residue. The Proton donor role is filled by His276.

Belongs to the D-isomer specific 2-hydroxyacid dehydrogenase family. GhrA subfamily.

The protein resides in the cytoplasm. It catalyses the reaction glycolate + NADP(+) = glyoxylate + NADPH + H(+). The catalysed reaction is (R)-glycerate + NAD(+) = 3-hydroxypyruvate + NADH + H(+). The enzyme catalyses (R)-glycerate + NADP(+) = 3-hydroxypyruvate + NADPH + H(+). Catalyzes the NADPH-dependent reduction of glyoxylate and hydroxypyruvate into glycolate and glycerate, respectively. The sequence is that of Glyoxylate/hydroxypyruvate reductase A from Photorhabdus laumondii subsp. laumondii (strain DSM 15139 / CIP 105565 / TT01) (Photorhabdus luminescens subsp. laumondii).